The sequence spans 548 residues: Isocitrate dehydrogenase [NAD(+)] 1, mitochondrial (548 aa).

A mitochondrion-targeting transit peptide spans 1–53; that stretch reads MSSLSTLRILHSTAGRRWASYYGIYPKSAACSSSSVAIARFFSTAADRPPKHA. Residues 132–134 and Asn153 contribute to the NAD(+) site; that span reads TIT. D-threo-isocitrate is bound by residues 151 to 157, Arg187, Tyr194, Lys266, Asp311, and Asp335; that span reads SPNGAMR. Mg(2+) contacts are provided by Asp311, Asp335, and Asp339. NAD(+) contacts are provided by residues 372 to 377 and Asn391; that span reads HGTVSD. One can recognise an EF-hand domain in the interval 499-534; it reads IDEEAINGLFQKYDKNGDGFIDFEEFTRMLVKMNLA. The Ca(2+) site is built by Asp512, Asn514, Asp516, Phe518, and Glu523.

The protein belongs to the isocitrate and isopropylmalate dehydrogenases family. As to quaternary structure, homodimer. Mg(2+) serves as cofactor. The cofactor is Mn(2+).

It localises to the mitochondrion. It carries out the reaction D-threo-isocitrate + NAD(+) = 2-oxoglutarate + CO2 + NADH. The homodimer exhibits allosteric regulation by isocitrate. Activated by Mn(2+) and Mg(2+). No activation by Na(+), K(+) or Li(+). Inhibited by Co(2+), Cu(2+) and Ni(2+), but not with Ca(2+) in the presence of Mn(2+) or Mg(2+). Competitively inhibited by NADH, but no effect on activity by 1.0 mM citrate. Strongly inhibited by excess ATP, ADP, AMP and alpha-ketoglutarate. In terms of biological role, performs an essential role in the oxidative function of the tricarboxylic acid cycle and respiration. Catalyzes the decarboxylation of isocitrate to produce 2-oxoglutarate and generate NADH to provide electrons for energy production. No activity with NADP(+). This chain is Isocitrate dehydrogenase [NAD(+)] 1, mitochondrial, found in Phaeodactylum tricornutum (strain CCAP 1055/1).